The sequence spans 340 residues: GTPase Obg (340 aa).

Positions 1–159 constitute an Obg domain; the sequence is MRFIDKAKIH…RWIELELKLI (159 aa). An OBG-type G domain is found at 160–331; the sequence is ADIGIIGFPN…LIKLIAEVYE (172 aa). Residues 166–173, 191–195, 213–216, 283–286, and 312–314 each bind GTP; these read GFPNAGKS, FTTLT, DIPG, NKID, and SLV. Mg(2+) is bound by residues serine 173 and threonine 193.

Belongs to the TRAFAC class OBG-HflX-like GTPase superfamily. OBG GTPase family. Monomer. Mg(2+) serves as cofactor.

The protein resides in the cytoplasm. Its function is as follows. An essential GTPase which binds GTP, GDP and possibly (p)ppGpp with moderate affinity, with high nucleotide exchange rates and a fairly low GTP hydrolysis rate. Plays a role in control of the cell cycle, stress response, ribosome biogenesis and in those bacteria that undergo differentiation, in morphogenesis control. The sequence is that of GTPase Obg from Persephonella marina (strain DSM 14350 / EX-H1).